We begin with the raw amino-acid sequence, 410 residues long: Peptidase T (410 aa).

H79 provides a ligand contact to Zn(2+). D81 is an active-site residue. D142 is a binding site for Zn(2+). Catalysis depends on E176, which acts as the Proton acceptor. 3 residues coordinate Zn(2+): E177, D199, and H381.

It belongs to the peptidase M20B family. Requires Zn(2+) as cofactor.

Its subcellular location is the cytoplasm. The catalysed reaction is Release of the N-terminal residue from a tripeptide.. In terms of biological role, cleaves the N-terminal amino acid of tripeptides. The protein is Peptidase T of Geobacillus sp. (strain WCH70).